Here is an 81-residue protein sequence, read N- to C-terminus: Exodeoxyribonuclease 7 small subunit (81 aa).

The tract at residues 61–81 is disordered; the sequence is MNDSDQEVAFETPQGGTGDAD.

The protein belongs to the XseB family. In terms of assembly, heterooligomer composed of large and small subunits.

The protein localises to the cytoplasm. It carries out the reaction Exonucleolytic cleavage in either 5'- to 3'- or 3'- to 5'-direction to yield nucleoside 5'-phosphates.. Functionally, bidirectionally degrades single-stranded DNA into large acid-insoluble oligonucleotides, which are then degraded further into small acid-soluble oligonucleotides. This is Exodeoxyribonuclease 7 small subunit from Levilactobacillus brevis (strain ATCC 367 / BCRC 12310 / CIP 105137 / JCM 1170 / LMG 11437 / NCIMB 947 / NCTC 947) (Lactobacillus brevis).